We begin with the raw amino-acid sequence, 124 residues long: Fluoride-specific ion channel FluC (124 aa).

4 helical membrane passes run 1-21 (MFNL…RHLT), 35-55 (WGTM…IAIL), 66-86 (LFVA…SLDF), and 99-119 (FGYA…GLWL). The Na(+) site is built by G74 and T77.

Belongs to the fluoride channel Fluc/FEX (TC 1.A.43) family.

It is found in the cell inner membrane. The enzyme catalyses fluoride(in) = fluoride(out). Na(+) is not transported, but it plays an essential structural role and its presence is essential for fluoride channel function. Functionally, fluoride-specific ion channel. Important for reducing fluoride concentration in the cell, thus reducing its toxicity. This chain is Fluoride-specific ion channel FluC, found in Mesorhizobium japonicum (strain LMG 29417 / CECT 9101 / MAFF 303099) (Mesorhizobium loti (strain MAFF 303099)).